We begin with the raw amino-acid sequence, 187 residues long: MSLLNDILEFNKTFTEQREYEKYQTSKFPDKKMAILSCMDTRLVELLPHAMNLRNGDVKIIKSAGALVTHPFGSIMRSILVAVYELNADEVCVIGHHDCGMSKISSKSMLEKIKARGIPEERIETIKYSGVDFDQWFKSFDSVEASVKDSVDVIKHHPLFPENVPVHGLVIDPKTGKLDLIVNGYNN.

Cys-38, Asp-40, His-96, and Cys-99 together coordinate Zn(2+).

It belongs to the beta-class carbonic anhydrase family. Requires Zn(2+) as cofactor.

It carries out the reaction hydrogencarbonate + H(+) = CO2 + H2O. In terms of biological role, reversible hydration of carbon dioxide. The protein is Putative carbonic anhydrase YtiB (ytiB) of Bacillus subtilis (strain 168).